A 314-amino-acid polypeptide reads, in one-letter code: DNA-directed RNA polymerase subunit alpha (314 aa).

Positions 1 to 228 (MIEIEKPKIE…EHLNIFVGLT (228 aa)) are alpha N-terminal domain (alpha-NTD). Residues 245-314 (KEKVLEMTIE…ELGLGLRKDD (70 aa)) are alpha C-terminal domain (alpha-CTD).

It belongs to the RNA polymerase alpha chain family. In terms of assembly, homodimer. RNAP is composed of a core of 2 alpha, a beta and a beta' subunit. The core is associated with a delta subunit, and at least one of epsilon or omega. When a sigma factor is associated with the core the holoenzyme is formed, which can initiate transcription.

It carries out the reaction RNA(n) + a ribonucleoside 5'-triphosphate = RNA(n+1) + diphosphate. In terms of biological role, DNA-dependent RNA polymerase catalyzes the transcription of DNA into RNA using the four ribonucleoside triphosphates as substrates. This is DNA-directed RNA polymerase subunit alpha from Bacillus subtilis (strain 168).